Reading from the N-terminus, the 80-residue chain is MLILSRKKNESIHIGDNIIITVVDIGGDNIKIGIDAPKNVQIFRSELLKAVEQENKNAVSSKSVIQDLAQLIKGDEKKQT.

The protein belongs to the CsrA/RsmA family. Homodimer; the beta-strands of each monomer intercalate to form a hydrophobic core, while the alpha-helices form wings that extend away from the core.

It is found in the cytoplasm. A translational regulator that binds mRNA to regulate translation initiation and/or mRNA stability. Usually binds in the 5'-UTR at or near the Shine-Dalgarno sequence preventing ribosome-binding, thus repressing translation. Its main target seems to be the major flagellin gene, while its function is anatagonized by FliW. The protein is Translational regulator CsrA of Desulforamulus reducens (strain ATCC BAA-1160 / DSM 100696 / MI-1) (Desulfotomaculum reducens).